A 395-amino-acid polypeptide reads, in one-letter code: Transcriptional coactivator yorkie (395 aa).

A disordered region spans residues N73–S100. Residues S82, S88, S100, S117, and S145 each carry the phosphoserine modification. Over residues S84 to S100 the composition is skewed to polar residues. Disordered stretches follow at residues P129–L150 and A162–S199. S146 is subject to Phosphoserine; by CDK7. S149 carries the post-translational modification Phosphoserine. The segment covering A162 to A179 has biased composition (low complexity). A Phosphoserine modification is found at S227. The residue at position 228 (Y228) is a Phosphotyrosine. S232 is modified (phosphoserine). WW domains are found at residues G241 to I274 and G310 to M343.

Belongs to the YAP1 family. In terms of assembly, interacts (via WW domains) with wts. Interacts (via N-terminus) with sd (via C-terminus) and this interaction enhances the transcriptional activity of sd. The phosphorylated form interacts with 14-3-3epsilon and 14-3-3zeta. Interacts with Ack and ex. Post-translationally, its activity is regulated by multiple phosphorylation events. Phosphorylation at Ser-88, Ser-145 and Ser-227 negatively regulate its activity and restrict its nuclear localization. Wts-mediated phosphorylation at Ser-145 promotes interaction with 14-3-3epsilon and 14-3-3zeta. Phosphorylation at Ser-88 and Ser-227 regulate nuclear localization and activity independent of 14-3-3 association. Phosphorylation at Ser-146 by Cdk7 promotes its stability by preventing ubiquitination by the DCX(DCAF12) complex. Ubiquitinated by the DCX(DCAF12) complex, leading to its degradation. Phosphorylation at Ser-146 by Cdk7 prevents ubiquitination by the DCX(DCAF12) complex.

It localises to the cytoplasm. It is found in the nucleus. Its function is as follows. Transcriptional coactivator which is the critical downstream regulatory target in the Hippo/SWH (Sav/Wts/Hpo) signaling pathway that plays a pivotal role in organ size control and tumor suppression by restricting proliferation and promoting apoptosis. The core of this pathway is composed of a kinase cascade wherein Hippo (Hpo), in complex with its regulatory protein Salvador (Sav), phosphorylates and activates Warts (Wts) in complex with its regulatory protein Mats, which in turn phosphorylates and inactivates the Yorkie (Yki) oncoprotein. The Hippo/SWH signaling pathway inhibits the activity of the transcriptional complex formed by Scalloped (sd) and Yki and the target genes of this pathway include cyclin-E (cycE), diap1 and bantam. Regulates the expression of G1/S-specific CycE and diap1, thereby promoting cell proliferation and inhibiting apoptosis. Required for transcriptional activity of sd in wing imaginal disks. Induces expression of expression of vestigial (vg) in wing and haltere disks and the expression of transcription factor E2f (E2f). The protein is Transcriptional coactivator yorkie (yki) of Drosophila melanogaster (Fruit fly).